Consider the following 456-residue polypeptide: CBL-interacting protein kinase 16 (456 aa).

Residues 22–277 (YELGRLLGQG…IPEIMRTPWF (256 aa)) form the Protein kinase domain. Residues 28 to 36 (LGQGTFAKV) and lysine 51 each bind ATP. The active-site Proton acceptor is aspartate 145. Positions 163–192 (DFGLAALPEQLRQDGLLHTQCGTPAYVAPE) are activation loop. The NAF domain occupies 309–335 (AMSPRTCNAFQLISSMSSGFDLSGMFE). The interval 339-368 (KAATVFTSRAPAATVIQKLEAVGRSLGYSA) is PPI.

Belongs to the protein kinase superfamily. CAMK Ser/Thr protein kinase family. SNF1 subfamily. Mn(2+) is required as a cofactor.

It carries out the reaction L-seryl-[protein] + ATP = O-phospho-L-seryl-[protein] + ADP + H(+). The enzyme catalyses L-threonyl-[protein] + ATP = O-phospho-L-threonyl-[protein] + ADP + H(+). Its function is as follows. CIPK serine-threonine protein kinases interact with CBL proteins. Binding of a CBL protein to the regulatory NAF domain of CIPK protein lead to the activation of the kinase in a calcium-dependent manner. The polypeptide is CBL-interacting protein kinase 16 (CIPK16) (Oryza sativa subsp. japonica (Rice)).